Reading from the N-terminus, the 187-residue chain is MAIISSLANQLLIAMPSLKDPNFERSVVYLCEHNEQGSVGLIINRPLQFPLSIVFEQLQIEPIRVEKNGLPLLFGGPVQPERGFVIHKQMGGWRSSLFLQDEVTVTTSNDIIRAIAYDEGPKDVLITLGYAAWTEQQLEREIMSNTWLVCPYKSEILYEVPFEERWEYAGLTLGIKMNQLSSDAGHA.

This sequence belongs to the UPF0301 (AlgH) family.

The sequence is that of UPF0301 protein lpl0620 from Legionella pneumophila (strain Lens).